The chain runs to 341 residues: L-threonine 3-dehydrogenase (341 aa).

Residue Cys38 coordinates Zn(2+). Active-site charge relay system residues include Thr40 and His43. Zn(2+) is bound by residues His63, Glu64, Cys93, Cys96, Cys99, and Cys107. NAD(+) contacts are provided by residues Ile175, Asp195, Arg200, 262-264 (LGI), and 286-287 (IY).

Belongs to the zinc-containing alcohol dehydrogenase family. Homotetramer. It depends on Zn(2+) as a cofactor.

The protein resides in the cytoplasm. The enzyme catalyses L-threonine + NAD(+) = (2S)-2-amino-3-oxobutanoate + NADH + H(+). The protein operates within amino-acid degradation; L-threonine degradation via oxydo-reductase pathway; glycine from L-threonine: step 1/2. Functionally, catalyzes the NAD(+)-dependent oxidation of L-threonine to 2-amino-3-ketobutyrate. The sequence is that of L-threonine 3-dehydrogenase from Pseudoalteromonas translucida (strain TAC 125).